A 213-amino-acid polypeptide reads, in one-letter code: Orotate phosphoribosyltransferase (213 aa).

Lys-26 is a binding site for 5-phospho-alpha-D-ribose 1-diphosphate. 34–35 provides a ligand contact to orotate; sequence FF. Residues 72 to 73, Arg-99, Lys-100, Lys-103, His-105, and 124 to 132 each bind 5-phospho-alpha-D-ribose 1-diphosphate; these read YK and DDVITAGTA. Thr-128 and Arg-156 together coordinate orotate.

Belongs to the purine/pyrimidine phosphoribosyltransferase family. PyrE subfamily. As to quaternary structure, homodimer. Mg(2+) serves as cofactor.

It catalyses the reaction orotidine 5'-phosphate + diphosphate = orotate + 5-phospho-alpha-D-ribose 1-diphosphate. The protein operates within pyrimidine metabolism; UMP biosynthesis via de novo pathway; UMP from orotate: step 1/2. Its function is as follows. Catalyzes the transfer of a ribosyl phosphate group from 5-phosphoribose 1-diphosphate to orotate, leading to the formation of orotidine monophosphate (OMP). This chain is Orotate phosphoribosyltransferase, found in Shigella flexneri.